The chain runs to 578 residues: Putative diflavin flavoprotein A 2 (578 aa).

The segment at 48-240 is zinc metallo-hydrolase; sequence RHGTTYNSFL…LQVVLVATGH (193 aa). Residues histidine 97, glutamate 99, aspartate 101, histidine 164, aspartate 183, and histidine 240 each contribute to the Fe cation site. Positions 269-406 constitute a Flavodoxin-like domain; sequence VALFYVDGYG…LCREAGTDLG (138 aa). The interval 429 to 578 is flavodoxin-reductase-like; sequence IGRLSTGLYI…THHRKLGNHY (150 aa).

In the N-terminal section; belongs to the zinc metallo-hydrolase group 3 family. The protein in the C-terminal section; belongs to the flavodoxin reductase family. Requires Fe cation as cofactor.

In terms of biological role, mediates electron transfer from NADH to oxygen, reducing it to water. This modular protein has 3 redox cofactors, in other organisms the same activity requires 2 or 3 proteins. The sequence is that of Putative diflavin flavoprotein A 2 (dfa2) from Synechocystis sp. (strain ATCC 27184 / PCC 6803 / Kazusa).